The chain runs to 353 residues: Guanine nucleotide-binding protein alpha-1 subunit (353 aa).

A disordered region spans residues 1–26 (MGCGMSTEEKEGKARNEEIENQLKRD). G2 is lipidated: N-myristoyl glycine. C3 carries S-palmitoyl cysteine lipidation. Over residues 7 to 26 (TEEKEGKARNEEIENQLKRD) the composition is skewed to basic and acidic residues. In terms of domain architecture, G-alpha spans 32–353 (NEIKMLLLGA…QENLRLCGLI (322 aa)). Positions 35 to 48 (KMLLLGAGESGKST) are G1 motif. Residues E43, S44, G45, K46, S47, T48, D150, L175, T181, G203, N269, K270, D272, and A325 each coordinate GTP. S47 is a binding site for Mg(2+). The tract at residues 173–181 (DVLRSRVKT) is G2 motif. T181 contributes to the Mg(2+) binding site. Residues 196–205 (YRMFDVGGQR) are G3 motif. Residues 265–272 (ILFLNKID) form a G4 motif region. A G5 motif region spans residues 323–328 (TCATDT).

Belongs to the G-alpha family. G(q) subfamily. In terms of assembly, g proteins are composed of 3 units; alpha, beta and gamma. The alpha chain contains the guanine nucleotide binding site. Mg(2+) is required as a cofactor.

Functionally, guanine nucleotide-binding proteins (G proteins) are involved as modulators or transducers in various transmembrane signaling systems. This chain is Guanine nucleotide-binding protein alpha-1 subunit (gna-1), found in Neurospora crassa (strain ATCC 24698 / 74-OR23-1A / CBS 708.71 / DSM 1257 / FGSC 987).